We begin with the raw amino-acid sequence, 396 residues long: Ribosomal RNA large subunit methyltransferase I (396 aa).

The region spanning 2–81 (SVRLVLAKGR…ESIDIAFFTR (80 aa)) is the PUA domain.

Belongs to the methyltransferase superfamily. RlmI family.

The protein resides in the cytoplasm. The catalysed reaction is cytidine(1962) in 23S rRNA + S-adenosyl-L-methionine = 5-methylcytidine(1962) in 23S rRNA + S-adenosyl-L-homocysteine + H(+). In terms of biological role, specifically methylates the cytosine at position 1962 (m5C1962) of 23S rRNA. The polypeptide is Ribosomal RNA large subunit methyltransferase I (Escherichia coli (strain SMS-3-5 / SECEC)).